The following is a 78-amino-acid chain: Acyl carrier protein (78 aa).

The 76-residue stretch at 2 to 77 (SDIAERVKKI…DAIKFLEKNS (76 aa)) folds into the Carrier domain. Ser-37 is subject to O-(pantetheine 4'-phosphoryl)serine.

Belongs to the acyl carrier protein (ACP) family. Post-translationally, 4'-phosphopantetheine is transferred from CoA to a specific serine of apo-ACP by AcpS. This modification is essential for activity because fatty acids are bound in thioester linkage to the sulfhydryl of the prosthetic group.

It localises to the cytoplasm. Its pathway is lipid metabolism; fatty acid biosynthesis. Carrier of the growing fatty acid chain in fatty acid biosynthesis. The chain is Acyl carrier protein from Methylorubrum extorquens (strain CM4 / NCIMB 13688) (Methylobacterium extorquens).